The chain runs to 4749 residues: Dynein heavy chain domain-containing protein 1 (4749 aa).

Residues Met1–Ser18 show a composition bias toward low complexity. Disordered stretches follow at residues Met1–Pro27, Glu275–Ser308, and Glu2690–Ser2785. The span at Cys2696–Ala2716 shows a compositional bias: acidic residues. The segment covering Gln2738–Ser2749 has biased composition (polar residues). The stretch at Cys3197–Gln3224 forms a coiled coil. Residues Pro3568–Ser3667 form a disordered region. The span at Ser3578–Ser3593 shows a compositional bias: basic and acidic residues. Positions Gly3594–Glu3636 form a coiled coil. Residues Asp3595–Ala3612 show a composition bias toward acidic residues. Positions Asn3613–Gly3628 are enriched in basic and acidic residues. Low complexity predominate over residues Glu3644 to Glu3655. The segment covering Thr3656 to Ser3667 has biased composition (polar residues). Coiled coils occupy residues Met3818 to Gln3838 and Glu4431 to Leu4451.

Belongs to the dynein heavy chain family. In terms of tissue distribution, expressed in spermatozoa (at protein level).

Its subcellular location is the cell projection. It is found in the cilium. The protein localises to the flagellum. In terms of biological role, essential for the normal function of sperm flagella axonemes. The chain is Dynein heavy chain domain-containing protein 1 (Dnhd1) from Mus musculus (Mouse).